Here is a 500-residue protein sequence, read N- to C-terminus: Bifunctional protein GlmU (500 aa).

The tract at residues 1–242 (MPVQTAVVVL…SAKVAGANDR (242 aa)) is pyrophosphorylase. Residues 10–13 (LAAG), lysine 24, glutamine 81, and 86–87 (GT) contribute to the UDP-N-acetyl-alpha-D-glucosamine site. Aspartate 112 serves as a coordination point for Mg(2+). UDP-N-acetyl-alpha-D-glucosamine-binding residues include glycine 151, glutamate 167, asparagine 182, and asparagine 240. Residue asparagine 240 participates in Mg(2+) binding. A linker region spans residues 243-263 (VQLSRLAAELNRRTVENWMRA). Positions 264-500 (GVTVVDPSTT…KQDLKDGIEQ (237 aa)) are N-acetyltransferase. Arginine 345 and lysine 363 together coordinate UDP-N-acetyl-alpha-D-glucosamine. The active-site Proton acceptor is the histidine 375. Residues tyrosine 378 and asparagine 389 each contribute to the UDP-N-acetyl-alpha-D-glucosamine site. Acetyl-CoA contacts are provided by residues alanine 392, 398–399 (NY), serine 417, and alanine 435. The tract at residues 472-500 (AEAAAAAGLHHSSDLHETEKQDLKDGIEQ) is disordered. The span at 482 to 500 (HSSDLHETEKQDLKDGIEQ) shows a compositional bias: basic and acidic residues.

The protein in the N-terminal section; belongs to the N-acetylglucosamine-1-phosphate uridyltransferase family. It in the C-terminal section; belongs to the transferase hexapeptide repeat family. In terms of assembly, homotrimer. Mg(2+) is required as a cofactor.

Its subcellular location is the cytoplasm. The enzyme catalyses alpha-D-glucosamine 1-phosphate + acetyl-CoA = N-acetyl-alpha-D-glucosamine 1-phosphate + CoA + H(+). It catalyses the reaction N-acetyl-alpha-D-glucosamine 1-phosphate + UTP + H(+) = UDP-N-acetyl-alpha-D-glucosamine + diphosphate. Its pathway is nucleotide-sugar biosynthesis; UDP-N-acetyl-alpha-D-glucosamine biosynthesis; N-acetyl-alpha-D-glucosamine 1-phosphate from alpha-D-glucosamine 6-phosphate (route II): step 2/2. It participates in nucleotide-sugar biosynthesis; UDP-N-acetyl-alpha-D-glucosamine biosynthesis; UDP-N-acetyl-alpha-D-glucosamine from N-acetyl-alpha-D-glucosamine 1-phosphate: step 1/1. The protein operates within bacterial outer membrane biogenesis; LPS lipid A biosynthesis. Functionally, catalyzes the last two sequential reactions in the de novo biosynthetic pathway for UDP-N-acetylglucosamine (UDP-GlcNAc). The C-terminal domain catalyzes the transfer of acetyl group from acetyl coenzyme A to glucosamine-1-phosphate (GlcN-1-P) to produce N-acetylglucosamine-1-phosphate (GlcNAc-1-P), which is converted into UDP-GlcNAc by the transfer of uridine 5-monophosphate (from uridine 5-triphosphate), a reaction catalyzed by the N-terminal domain. The protein is Bifunctional protein GlmU of Rhodococcus jostii (strain RHA1).